A 131-amino-acid polypeptide reads, in one-letter code: Leptin receptor overlapping transcript-like 1 (131 aa).

The next 4 helical transmembrane spans lie at 7 to 27 (LISL…GCAL), 32 to 52 (QYWP…YCIA), 69 to 89 (LAIF…IVFA), and 100 to 120 (ALVL…FLVF).

It belongs to the OB-RGRP/VPS55 family.

The protein localises to the membrane. Negatively regulates growth hormone (GH) receptor cell surface expression in liver. May play a role in liver resistance to GH during periods of reduced nutrient availability. In Bos taurus (Bovine), this protein is Leptin receptor overlapping transcript-like 1 (LEPROTL1).